A 345-amino-acid polypeptide reads, in one-letter code: Anthranilate phosphoribosyltransferase (345 aa).

Residues Gly84, 87-88 (GD), Thr92, 94-97 (NIST), 112-120 (KHGGRGVSS), and Ser124 contribute to the 5-phospho-alpha-D-ribose 1-diphosphate site. Gly84 serves as a coordination point for anthranilate. Ser96 provides a ligand contact to Mg(2+). Arg170 contributes to the anthranilate binding site. Mg(2+) contacts are provided by Asp229 and Glu230.

It belongs to the anthranilate phosphoribosyltransferase family. In terms of assembly, homodimer. Mg(2+) is required as a cofactor.

The catalysed reaction is N-(5-phospho-beta-D-ribosyl)anthranilate + diphosphate = 5-phospho-alpha-D-ribose 1-diphosphate + anthranilate. It participates in amino-acid biosynthesis; L-tryptophan biosynthesis; L-tryptophan from chorismate: step 2/5. Its function is as follows. Catalyzes the transfer of the phosphoribosyl group of 5-phosphorylribose-1-pyrophosphate (PRPP) to anthranilate to yield N-(5'-phosphoribosyl)-anthranilate (PRA). In Paracidovorax citrulli (strain AAC00-1) (Acidovorax citrulli), this protein is Anthranilate phosphoribosyltransferase.